The primary structure comprises 352 residues: V-type ATP synthase subunit C (352 aa).

This sequence belongs to the V-ATPase V0D/AC39 subunit family.

Its function is as follows. Produces ATP from ADP in the presence of a proton gradient across the membrane. The chain is V-type ATP synthase subunit C (atpC) from Deinococcus radiodurans (strain ATCC 13939 / DSM 20539 / JCM 16871 / CCUG 27074 / LMG 4051 / NBRC 15346 / NCIMB 9279 / VKM B-1422 / R1).